A 27-amino-acid chain; its full sequence is Histone H1.3, embryonic (27 aa).

The H15 domain occupies 1–27 (HVVAAITALKERGGSSHQALKKYKAAN).

The protein belongs to the histone H1/H5 family.

The protein resides in the nucleus. Its subcellular location is the chromosome. In terms of biological role, histones H1 are necessary for the condensation of nucleosome chains into higher-order structures. The polypeptide is Histone H1.3, embryonic (Parechinus angulosus (Angulate sea urchin)).